Here is a 221-residue protein sequence, read N- to C-terminus: MSRSLGRLYLVATPRPDQPEAEFLARVEAALDGGVDTLQLRCKAGSPQYGEARPYIALARRVGALAQARDVPFFVNDRVDVALASGADGVHLGQDDLPAEWARRLAPGLQIGLSTHSPEQAARAQAEHPTYFAVGPVYATPTKPGRAAAGLAYVRHVAALCPAVPWYAIGGVDLSTVDDVVAAGATRVAVVRAVLDAPDPARAAADLLARLPDAWEARVCR.

4-amino-2-methyl-5-(diphosphooxymethyl)pyrimidine is bound by residues 39–43 (QLRCK) and Asn-76. Asp-77 and Asp-96 together coordinate Mg(2+). Ser-114 is a 4-amino-2-methyl-5-(diphosphooxymethyl)pyrimidine binding site. Residue 140-142 (TPT) coordinates 2-[(2R,5Z)-2-carboxy-4-methylthiazol-5(2H)-ylidene]ethyl phosphate. Lys-143 contacts 4-amino-2-methyl-5-(diphosphooxymethyl)pyrimidine. Gly-171 is a binding site for 2-[(2R,5Z)-2-carboxy-4-methylthiazol-5(2H)-ylidene]ethyl phosphate.

Belongs to the thiamine-phosphate synthase family. Requires Mg(2+) as cofactor.

It catalyses the reaction 2-[(2R,5Z)-2-carboxy-4-methylthiazol-5(2H)-ylidene]ethyl phosphate + 4-amino-2-methyl-5-(diphosphooxymethyl)pyrimidine + 2 H(+) = thiamine phosphate + CO2 + diphosphate. It carries out the reaction 2-(2-carboxy-4-methylthiazol-5-yl)ethyl phosphate + 4-amino-2-methyl-5-(diphosphooxymethyl)pyrimidine + 2 H(+) = thiamine phosphate + CO2 + diphosphate. The catalysed reaction is 4-methyl-5-(2-phosphooxyethyl)-thiazole + 4-amino-2-methyl-5-(diphosphooxymethyl)pyrimidine + H(+) = thiamine phosphate + diphosphate. The protein operates within cofactor biosynthesis; thiamine diphosphate biosynthesis; thiamine phosphate from 4-amino-2-methyl-5-diphosphomethylpyrimidine and 4-methyl-5-(2-phosphoethyl)-thiazole: step 1/1. Functionally, condenses 4-methyl-5-(beta-hydroxyethyl)thiazole monophosphate (THZ-P) and 2-methyl-4-amino-5-hydroxymethyl pyrimidine pyrophosphate (HMP-PP) to form thiamine monophosphate (TMP). In Deinococcus geothermalis (strain DSM 11300 / CIP 105573 / AG-3a), this protein is Thiamine-phosphate synthase.